Reading from the N-terminus, the 240-residue chain is MEIQGLTIAYKQKVAIDNVTLQIASGKLTGIVGPNGAGKSTLLKGMMGLIPREQGQVTLADKPLTYWRKKIAYVPQRSEVDLTFPITVFDMVLLGTYPALGLIKRPGKKEKQLALDALEQVEMTGFMKRQIGELSGGQLQRVFIARALAQHAEIFFLDEPFAGIDMTSEALIMRLLKKLRDNGKTIVVVHHDFHKVAAYFDDIILLNKKLVAHGPVEQTFTEEKIQFAYGDAPVAFAAGV.

Residues Met-1 to Pro-233 form the ABC transporter domain. Residue Gly-33 to Ser-40 participates in ATP binding.

Belongs to the ABC transporter superfamily.

It localises to the cell membrane. Its function is as follows. This protein is probably a component of a manganese permease, a binding protein-dependent, ATP-driven transport system. Probably responsible for energy coupling to the transport system. This Listeria monocytogenes serovar 1/2a (strain ATCC BAA-679 / EGD-e) protein is Manganese transport system ATP-binding protein MntB (mntB).